The primary structure comprises 100 residues: Integration host factor subunit alpha (100 aa).

Belongs to the bacterial histone-like protein family. In terms of assembly, heterodimer of an alpha and a beta chain.

In terms of biological role, this protein is one of the two subunits of integration host factor, a specific DNA-binding protein that functions in genetic recombination as well as in transcriptional and translational control. In Rhizorhabdus wittichii (strain DSM 6014 / CCUG 31198 / JCM 15750 / NBRC 105917 / EY 4224 / RW1) (Sphingomonas wittichii), this protein is Integration host factor subunit alpha.